Reading from the N-terminus, the 537-residue chain is Putative cysteine ligase BshC (537 aa).

Residues 417 to 457 are a coiled coil; it reads ASEQFLNELDQLEAQQKETYERLAAEVQGNEDNKNLVEKNN.

It belongs to the BshC family.

In terms of biological role, involved in bacillithiol (BSH) biosynthesis. May catalyze the last step of the pathway, the addition of cysteine to glucosamine malate (GlcN-Mal) to generate BSH. The chain is Putative cysteine ligase BshC from Staphylococcus carnosus (strain TM300).